The following is a 728-amino-acid chain: Catalase-peroxidase 1 (728 aa).

An N-terminal signal peptide occupies residues Met-1–Ala-22. A cross-link (tryptophyl-tyrosyl-methioninium (Trp-Tyr) (with M-251)) is located at residues Trp-97–Tyr-225. The active-site Proton acceptor is the His-98. The segment at residues Tyr-225–Met-251 is a cross-link (tryptophyl-tyrosyl-methioninium (Tyr-Met) (with W-97)). Position 266 (His-266) interacts with heme b.

It belongs to the peroxidase family. Peroxidase/catalase subfamily. Homodimer or homotetramer. Heme b is required as a cofactor. Post-translationally, formation of the three residue Trp-Tyr-Met cross-link is important for the catalase, but not the peroxidase activity of the enzyme.

The enzyme catalyses H2O2 + AH2 = A + 2 H2O. It catalyses the reaction 2 H2O2 = O2 + 2 H2O. Bifunctional enzyme with both catalase and broad-spectrum peroxidase activity. The sequence is that of Catalase-peroxidase 1 from Shewanella sp. (strain MR-7).